A 178-amino-acid polypeptide reads, in one-letter code: MTTLRAFTCDDLFKFNNINLDPLTETYGIPFYLQYLAHWPEYFIVAEAPGGELMGYIMGKAEGSVAREEWHGHVTALSVAPEFRRLGLAAKLMEMLEEISERKGGFFVDLFVRVSNQVAVNMYKQLGYSVYRTVIEYYSASNGEPDEDAYDMRKALSRDTEKKSIIPLPHPVRPEDIE.

The N-acetyltransferase domain occupies 2–157 (TTLRAFTCDD…DAYDMRKALS (156 aa)).

This sequence belongs to the acetyltransferase family. ARD1 subfamily. In terms of assembly, component of the N-terminal acetyltransferase B (NatB) complex which is composed of naa20 and naa25.

The protein resides in the cytoplasm. Its subcellular location is the nucleus. It catalyses the reaction N-terminal L-methionyl-L-asparaginyl-[protein] + acetyl-CoA = N-terminal N(alpha)-acetyl-L-methionyl-L-asparaginyl-[protein] + CoA + H(+). It carries out the reaction N-terminal L-methionyl-L-glutaminyl-[protein] + acetyl-CoA = N-terminal N(alpha)-acetyl-L-methionyl-L-glutaminyl-[protein] + CoA + H(+). The catalysed reaction is N-terminal L-methionyl-L-aspartyl-[protein] + acetyl-CoA = N-terminal N(alpha)-acetyl-L-methionyl-L-aspartyl-[protein] + CoA + H(+). The enzyme catalyses N-terminal L-methionyl-L-glutamyl-[protein] + acetyl-CoA = N-terminal N(alpha)-acetyl-L-methionyl-L-glutamyl-[protein] + CoA + H(+). Functionally, catalytic subunit of the NatB complex which catalyzes acetylation of the N-terminal methionine residues of peptides beginning with Met-Asp, Met-Glu, Met-Asn and Met-Gln. Proteins with cell cycle functions are overrepresented in the pool of NatB substrates. Required for maintaining the structure and function of actomyosin fibers and for proper cellular migration. This is N-alpha-acetyltransferase 20 (naa20) from Danio rerio (Zebrafish).